We begin with the raw amino-acid sequence, 311 residues long: Ribosomal RNA small subunit methyltransferase H (311 aa).

S-adenosyl-L-methionine is bound by residues 41–43 (GGH), D61, F85, D102, and Q109.

The protein belongs to the methyltransferase superfamily. RsmH family.

Its subcellular location is the cytoplasm. It carries out the reaction cytidine(1402) in 16S rRNA + S-adenosyl-L-methionine = N(4)-methylcytidine(1402) in 16S rRNA + S-adenosyl-L-homocysteine + H(+). Its function is as follows. Specifically methylates the N4 position of cytidine in position 1402 (C1402) of 16S rRNA. In Paracidovorax citrulli (strain AAC00-1) (Acidovorax citrulli), this protein is Ribosomal RNA small subunit methyltransferase H.